Here is a 475-residue protein sequence, read N- to C-terminus: Protein translocase subunit SecD (475 aa).

6 consecutive transmembrane segments (helical) span residues 7-27 (LLIT…SLKF), 313-333 (KGFM…FIYY), 338-358 (LIAD…MAYL), 364-384 (LPGV…NVLI), 410-430 (FWTI…LFQF), and 437-457 (GFAV…VTVT).

It belongs to the SecD/SecF family. SecD subfamily. In terms of assembly, forms a complex with SecF. Part of the essential Sec protein translocation apparatus which comprises SecA, SecYEG and auxiliary proteins SecDF. Other proteins may also be involved.

The protein localises to the cell inner membrane. Its function is as follows. Part of the Sec protein translocase complex. Interacts with the SecYEG preprotein conducting channel. SecDF uses the proton motive force (PMF) to complete protein translocation after the ATP-dependent function of SecA. The chain is Protein translocase subunit SecD from Endomicrobium trichonymphae.